A 141-amino-acid chain; its full sequence is Large ribosomal subunit protein uL11 (141 aa).

The protein belongs to the universal ribosomal protein uL11 family. As to quaternary structure, part of the ribosomal stalk of the 50S ribosomal subunit. Interacts with L10 and the large rRNA to form the base of the stalk. L10 forms an elongated spine to which L12 dimers bind in a sequential fashion forming a multimeric L10(L12)X complex. Post-translationally, one or more lysine residues are methylated.

Its function is as follows. Forms part of the ribosomal stalk which helps the ribosome interact with GTP-bound translation factors. This is Large ribosomal subunit protein uL11 from Aliarcobacter butzleri (strain RM4018) (Arcobacter butzleri).